The chain runs to 377 residues: Hydrogenase maturation factor HypD (377 aa).

Positions 41, 69, and 72 each coordinate Fe cation.

The protein belongs to the HypD family. It depends on [4Fe-4S] cluster as a cofactor.

It functions in the pathway protein modification; [NiFe] hydrogenase maturation. Its function is as follows. Involved in the maturation of [NiFe] hydrogenases. Involved in the biosynthesis of the Fe(CN)(2)CO cofactor. In Rhodobacter capsulatus (Rhodopseudomonas capsulata), this protein is Hydrogenase maturation factor HypD.